We begin with the raw amino-acid sequence, 62 residues long: Protein sigN176 (62 aa).

In Dictyostelium discoideum (Social amoeba), this protein is Protein sigN176.